Here is a 190-residue protein sequence, read N- to C-terminus: 6,7-dimethyl-8-ribityllumazine synthase (190 aa).

Residues F23, 61-63, and 85-87 contribute to the 5-amino-6-(D-ribitylamino)uracil site; these read SFE and AVI. 90 to 91 lines the (2S)-2-hydroxy-3-oxobutyl phosphate pocket; that stretch reads QT. Catalysis depends on H93, which acts as the Proton donor. Residue F118 coordinates 5-amino-6-(D-ribitylamino)uracil. R132 is a binding site for (2S)-2-hydroxy-3-oxobutyl phosphate.

It belongs to the DMRL synthase family.

The enzyme catalyses (2S)-2-hydroxy-3-oxobutyl phosphate + 5-amino-6-(D-ribitylamino)uracil = 6,7-dimethyl-8-(1-D-ribityl)lumazine + phosphate + 2 H2O + H(+). Its pathway is cofactor biosynthesis; riboflavin biosynthesis; riboflavin from 2-hydroxy-3-oxobutyl phosphate and 5-amino-6-(D-ribitylamino)uracil: step 1/2. In terms of biological role, catalyzes the formation of 6,7-dimethyl-8-ribityllumazine by condensation of 5-amino-6-(D-ribitylamino)uracil with 3,4-dihydroxy-2-butanone 4-phosphate. This is the penultimate step in the biosynthesis of riboflavin. This is 6,7-dimethyl-8-ribityllumazine synthase from Nostoc sp. (strain PCC 7120 / SAG 25.82 / UTEX 2576).